A 1300-amino-acid chain; its full sequence is Kinesin-like protein KIN-4C (1300 aa).

The Kinesin motor domain occupies 6–360; the sequence is CVRVAVNIRP…LKYANRARNI (355 aa). ATP is bound at residue 85–92; sequence GQTGSGKT. Coiled-coil stretches lie at residues 580–615, 653–697, and 781–823; these read TSVL…LASI, QLMR…RAWK, and EVTV…AKIS. Basic and acidic residues-rich tracts occupy residues 956 to 971 and 1001 to 1013; these read ADEN…KQET and EWKP…RESE. Disordered regions lie at residues 956 to 1018, 1097 to 1132, 1144 to 1187, and 1200 to 1300; these read ADEN…ESVI, NADG…QQQV, ALAD…RKKW, and PALP…TRRV. 4 stretches are compositionally biased toward polar residues: residues 1169-1180, 1205-1222, 1230-1239, and 1275-1288; these read IGNTTGKSNVPR, THTN…TVDS, NSDSGESNSI, and GFVQ…SGSR. Residues 1289 to 1300 are compositionally biased toward basic and acidic residues; the sequence is TSDEKENHTRRV.

The protein belongs to the TRAFAC class myosin-kinesin ATPase superfamily. Kinesin family. KIN-4 subfamily. In terms of assembly, homodimer.

Kinesin-like motor protein involved in the control of the oriented deposition of cellulose microfibrils. In Arabidopsis thaliana (Mouse-ear cress), this protein is Kinesin-like protein KIN-4C.